Reading from the N-terminus, the 1402-residue chain is DNA-directed RNA polymerase subunit beta' (1402 aa).

4 residues coordinate Zn(2+): Cys-73, Cys-75, Cys-88, and Cys-91. Residues Asp-464, Asp-466, and Asp-468 each coordinate Mg(2+). 4 residues coordinate Zn(2+): Cys-812, Cys-886, Cys-893, and Cys-896.

This sequence belongs to the RNA polymerase beta' chain family. In terms of assembly, the RNAP catalytic core consists of 2 alpha, 1 beta, 1 beta' and 1 omega subunit. When a sigma factor is associated with the core the holoenzyme is formed, which can initiate transcription. Mg(2+) is required as a cofactor. It depends on Zn(2+) as a cofactor.

The catalysed reaction is RNA(n) + a ribonucleoside 5'-triphosphate = RNA(n+1) + diphosphate. Functionally, DNA-dependent RNA polymerase catalyzes the transcription of DNA into RNA using the four ribonucleoside triphosphates as substrates. This chain is DNA-directed RNA polymerase subunit beta', found in Rhodopseudomonas palustris (strain ATCC BAA-98 / CGA009).